Here is a 185-residue protein sequence, read N- to C-terminus: MANAIIETAKERFTQSHHSLAREYASIRAGRANASLLDRIQVDYYGAPTPLNQLASITVPEARVLLISPFDKSSIKDIERALNASDLGITPANDGSVIRLVIPALTEETRKELAKEVKKVGETAKVSIRNIRRDAMDEAKKQEKAKEITEDELKALEKDIQKATDEAVKEIDRMTADKEKELLSV.

It belongs to the RRF family.

The protein localises to the cytoplasm. Its function is as follows. Responsible for the release of ribosomes from messenger RNA at the termination of protein biosynthesis. May increase the efficiency of translation by recycling ribosomes from one round of translation to another. The polypeptide is Ribosome-recycling factor (Streptococcus equi subsp. equi (strain 4047)).